Reading from the N-terminus, the 569-residue chain is S-(+)-linalool synthase, chloroplastic (569 aa).

Residues 1–39 constitute a chloroplast transit peptide; it reads MALIATKISSRSCFVSAYPNNSPTFLISKFPNTVDSLSP. Arg-294, Asp-331, Asp-335, Arg-472, and Asp-475 together coordinate (2E)-geranyl diphosphate. Mg(2+)-binding residues include Asp-331 and Asp-335. The DDXXD motif signature appears at 331–335; sequence DDIFD. Positions 475, 479, and 483 each coordinate Mg(2+).

It belongs to the terpene synthase family. Tpsb subfamily. It depends on Mg(2+) as a cofactor. Mn(2+) is required as a cofactor. In terms of tissue distribution, predominantly expressed in flowers but also in stems and siliques.

It localises to the plastid. Its subcellular location is the chloroplast. The enzyme catalyses (2E)-geranyl diphosphate + H2O = (S)-linalool + diphosphate. It functions in the pathway secondary metabolite biosynthesis; terpenoid biosynthesis. Functionally, involved in monoterpene (C10) biosynthesis. The major product is (S)-linalool. In Arabidopsis thaliana (Mouse-ear cress), this protein is S-(+)-linalool synthase, chloroplastic.